Consider the following 630-residue polypeptide: 1,4-alpha-glucan branching enzyme GlgB (630 aa).

Catalysis depends on Asp308, which acts as the Nucleophile. The active-site Proton donor is the Glu361.

It belongs to the glycosyl hydrolase 13 family. GlgB subfamily. Monomer.

It carries out the reaction Transfers a segment of a (1-&gt;4)-alpha-D-glucan chain to a primary hydroxy group in a similar glucan chain.. It participates in glycan biosynthesis; glycogen biosynthesis. Catalyzes the formation of the alpha-1,6-glucosidic linkages in glycogen by scission of a 1,4-alpha-linked oligosaccharide from growing alpha-1,4-glucan chains and the subsequent attachment of the oligosaccharide to the alpha-1,6 position. The polypeptide is 1,4-alpha-glucan branching enzyme GlgB (Halothermothrix orenii (strain H 168 / OCM 544 / DSM 9562)).